A 375-amino-acid chain; its full sequence is Chaperone protein DnaJ (375 aa).

Residues 5–70 (DYYEILGISK…EKRAAYDQYG (66 aa)) form the J domain. A CR-type zinc finger spans residues 130-208 (GIIKEICIPT…CHGNGRVERS (79 aa)). 8 residues coordinate Zn(2+): cysteine 143, cysteine 146, cysteine 160, cysteine 163, cysteine 182, cysteine 185, cysteine 196, and cysteine 199. 4 CXXCXGXG motif repeats span residues 143-150 (CEKCRGTG), 160-167 (CMTCHGQG), 182-189 (CPTCHGHG), and 196-203 (CNKCHGNG).

The protein belongs to the DnaJ family. Homodimer. Zn(2+) is required as a cofactor.

It is found in the cytoplasm. Its function is as follows. Participates actively in the response to hyperosmotic and heat shock by preventing the aggregation of stress-denatured proteins and by disaggregating proteins, also in an autonomous, DnaK-independent fashion. Unfolded proteins bind initially to DnaJ; upon interaction with the DnaJ-bound protein, DnaK hydrolyzes its bound ATP, resulting in the formation of a stable complex. GrpE releases ADP from DnaK; ATP binding to DnaK triggers the release of the substrate protein, thus completing the reaction cycle. Several rounds of ATP-dependent interactions between DnaJ, DnaK and GrpE are required for fully efficient folding. Also involved, together with DnaK and GrpE, in the DNA replication of plasmids through activation of initiation proteins. In Blochmanniella pennsylvanica (strain BPEN), this protein is Chaperone protein DnaJ.